The following is a 617-amino-acid chain: Vacuolar protein sorting-associated protein 33B (617 aa).

It belongs to the STXBP/unc-18/SEC1 family. In terms of assembly, probable core component of the class C core vacuole/endosome tethering (CORVET) complex. The common core is composed of the class C Vps proteins vps-11, vps-16 and vps-18, and which further associates with vps-8 and vps-33.2. Interacts with spe-39. As to expression, broadly expressed in somatic tissues including the pharynx, intestine, spermatheca, and in coelomocytes. Expressed in the lining of the gut lumen.

The protein localises to the early endosome. Its subcellular location is the late endosome membrane. The protein resides in the lysosome membrane. It is found in the cytoplasmic vesicle. It localises to the clathrin-coated vesicle. The protein localises to the recycling endosome. Functionally, plays a role in vesicle-mediated protein trafficking to lysosomal compartments and in membrane docking/fusion reactions of late endosomes/lysosomes. Believed to act as a component of the putative CORVET endosomal tethering complex which is proposed to be involved in the rab-5-to-rab-7 endosome conversion probably implicating sand-1, and via binding SNAREs and SNARE complexes to mediate tethering and docking events during SNARE-mediated membrane fusion. The CORVET complex is proposed to function as a rab-5 effector to mediate early endosome fusion probably in specific endosome subpopulations. Most likely within the CORVET complex, it is involved in the fusion of endocytic compartments. Required for sperm development and function. This chain is Vacuolar protein sorting-associated protein 33B, found in Caenorhabditis elegans.